The sequence spans 329 residues: GTP 3',8-cyclase (329 aa).

Positions 8–234 (AFARKFYYLR…QLRQRSDGPA (227 aa)) constitute a Radical SAM core domain. Arg17 serves as a coordination point for GTP. [4Fe-4S] cluster is bound by residues Cys24 and Cys28. Tyr30 provides a ligand contact to S-adenosyl-L-methionine. Cys31 lines the [4Fe-4S] cluster pocket. Arg68 contacts GTP. Gly72 serves as a coordination point for S-adenosyl-L-methionine. Residue Thr99 participates in GTP binding. Ser123 lines the S-adenosyl-L-methionine pocket. Lys160 serves as a coordination point for GTP. Position 194 (Met194) interacts with S-adenosyl-L-methionine. The [4Fe-4S] cluster site is built by Cys257 and Cys260. 262 to 264 (RLR) provides a ligand contact to GTP. [4Fe-4S] cluster is bound at residue Cys274.

It belongs to the radical SAM superfamily. MoaA family. As to quaternary structure, monomer and homodimer. [4Fe-4S] cluster serves as cofactor.

It catalyses the reaction GTP + AH2 + S-adenosyl-L-methionine = (8S)-3',8-cyclo-7,8-dihydroguanosine 5'-triphosphate + 5'-deoxyadenosine + L-methionine + A + H(+). It participates in cofactor biosynthesis; molybdopterin biosynthesis. Catalyzes the cyclization of GTP to (8S)-3',8-cyclo-7,8-dihydroguanosine 5'-triphosphate. The sequence is that of GTP 3',8-cyclase from Shigella sonnei (strain Ss046).